A 312-amino-acid polypeptide reads, in one-letter code: MANIVFKLSDKDITTLMSRITFDTENLPQGMKARAKYQNTTVNIYQSGKVMFQGNHAEAVSKELLPQHSQLNTNKTKKKNMANSFLEQTLMYDQFNCIGSDEAGSGDYFGPLTVCAAFVTKEHVPILKTLGVDDSKKLTDTKIVELADQLVTFIPHSLLTLHNEKYNIQQAKGWTQVKMKAVLHNEAIKNVLEKIDSSQLDYIVIDQFAKREVYNHYALSDIPLPKKTKFETKGESKSLAIAVASIISRYAFVTYMDQISKNINMTIPKGAGAKVDVIAAKIIKKYGLSHLDTISKKHFKNREKAQKILKPL.

Positions 95 to 311 (FNCIGSDEAG…REKAQKILKP (217 aa)) constitute an RNase H type-2 domain. D101, E102, and D206 together coordinate a divalent metal cation.

It belongs to the RNase HII family. RnhC subfamily. Mn(2+) is required as a cofactor. Requires Mg(2+) as cofactor.

The protein resides in the cytoplasm. It catalyses the reaction Endonucleolytic cleavage to 5'-phosphomonoester.. Endonuclease that specifically degrades the RNA of RNA-DNA hybrids. The chain is Ribonuclease HIII from Staphylococcus aureus (strain MSSA476).